The chain runs to 287 residues: MPSISVHAYAKINLGLFITGKRDDGYHNLETIFAPVSWHDTLCFSPADAISMRCTNADLPTDGSNLCIRAARSLQEYAGVGDGVSIELDKQVPFGAGLGGGSSDAATVLRVLNGFWNINATVEDLHPLAVKLGADVPYFLEMEGLAYAGGIGDELTDLHAGLPWHVVTVFPAEHISTAWAYGNFHRRFGQSRPDIRTIAADLSGIGDTGRLELFENDFQSAVFEQFPKVRRVHTDLLEAGAVFASLSGSGSAVYGLFETAMDARRAIERQRASYPTNLTPPGFSMRQ.

Residue K11 is part of the active site. Residue 93 to 103 (PFGAGLGGGSS) coordinates ATP. Residue D135 is part of the active site.

The protein belongs to the GHMP kinase family. IspE subfamily.

The catalysed reaction is 4-CDP-2-C-methyl-D-erythritol + ATP = 4-CDP-2-C-methyl-D-erythritol 2-phosphate + ADP + H(+). Its pathway is isoprenoid biosynthesis; isopentenyl diphosphate biosynthesis via DXP pathway; isopentenyl diphosphate from 1-deoxy-D-xylulose 5-phosphate: step 3/6. Catalyzes the phosphorylation of the position 2 hydroxy group of 4-diphosphocytidyl-2C-methyl-D-erythritol. The chain is 4-diphosphocytidyl-2-C-methyl-D-erythritol kinase from Chlorobium luteolum (strain DSM 273 / BCRC 81028 / 2530) (Pelodictyon luteolum).